The sequence spans 384 residues: F-box/kelch-repeat protein At3g44120 (384 aa).

In terms of domain architecture, F-box spans 1-46 (MTLPELPKDLVEEILCFVPATSLKRLRSSCKEWNRLFKDDKRFARK). Kelch repeat units lie at residues 156 to 202 (CNKS…RECF), 264 to 314 (SVLV…FLLD), and 352 to 384 (GVQTIGGYSPIIVNYVPSLGQIELAGSKRKRDY).

In Arabidopsis thaliana (Mouse-ear cress), this protein is F-box/kelch-repeat protein At3g44120.